Here is a 377-residue protein sequence, read N- to C-terminus: Heat stress transcription factor B-2b (377 aa).

The disordered stretch occupies residues 1–56 (MPGEQTGETPTVAGVGGGGAGCSAGNSGGSSGCGAGGGGGGSGGGGGGGGDSQRSI). Positions 14-51 (GVGGGGAGCSAGNSGGSSGCGAGGGGGGSGGGGGGGGD) are enriched in gly residues. A DNA-binding region spans residues 57-151 (PTPFLTKTYQ…LLRDIQRRKI (95 aa)). Residues 220–265 (TTSCTTAPELVEENERLRKDNERLRKEMTKLKGLYANIYTLMANFT) form a hydrophobic repeat HR-A/B region. Residues 323 to 327 (KRARR) carry the Nuclear localization signal motif. Positions 326-377 (RREEELGAAEEEDDDRREAAAQEGEQSSDVKAEPMEENNSGNHNGSWLELGK) are disordered. Positions 331–340 (LGAAEEEDDD) are enriched in acidic residues.

This sequence belongs to the HSF family. Class B subfamily. In terms of assembly, homotrimer. Post-translationally, exhibits temperature-dependent phosphorylation.

The protein resides in the nucleus. In terms of biological role, transcriptional regulator that specifically binds DNA sequence 5'-AGAAnnTTCT-3' known as heat shock promoter elements (HSE). In Arabidopsis thaliana (Mouse-ear cress), this protein is Heat stress transcription factor B-2b (HSFB2B).